The following is a 421-amino-acid chain: Aspartokinase (421 aa).

An ATP-binding site is contributed by K7–G10. Position 25 to 30 (R25 to K30) interacts with substrate. Residue S41 coordinates ATP. Residues D45–D49, E74, L125–D126, R151–S154, and S154 contribute to the substrate site. ATP-binding positions include T174–D175, F180–R185, and K210. 2 ACT domains span residues V267–S348 and L349–R421. Substrate-binding positions include D274, D274–A279, N292–D294, Q298, V360–T361, N374–I375, and S381–E382.

This sequence belongs to the aspartokinase family. Heterotetramer consisting of 2 isoforms Alpha (catalytic and regulation) and of a homodimer of 2 isoforms Beta (regulation).

It catalyses the reaction L-aspartate + ATP = 4-phospho-L-aspartate + ADP. The protein operates within amino-acid biosynthesis; L-lysine biosynthesis via DAP pathway; (S)-tetrahydrodipicolinate from L-aspartate: step 1/4. Its pathway is amino-acid biosynthesis; L-methionine biosynthesis via de novo pathway; L-homoserine from L-aspartate: step 1/3. It participates in amino-acid biosynthesis; L-threonine biosynthesis; L-threonine from L-aspartate: step 1/5. Its activity is regulated as follows. Feedback inhibition by lysine and threonine. In terms of biological role, catalyzes the phosphorylation of the beta-carboxyl group of aspartic acid with ATP to yield 4-phospho-L-aspartate, which is involved in the branched biosynthetic pathway leading to the biosynthesis of amino acids lysine, threonine, isoleucine and methionine. In Mycolicibacterium smegmatis (Mycobacterium smegmatis), this protein is Aspartokinase (ask).